Consider the following 139-residue polypeptide: Large ribosomal subunit protein uL16 (139 aa).

The interval 74–94 (LTKKPAETRQGSGKGSPESWV) is disordered.

It belongs to the universal ribosomal protein uL16 family. Part of the 50S ribosomal subunit.

Its function is as follows. Binds 23S rRNA and is also seen to make contacts with the A and possibly P site tRNAs. The polypeptide is Large ribosomal subunit protein uL16 (Saccharopolyspora erythraea (strain ATCC 11635 / DSM 40517 / JCM 4748 / NBRC 13426 / NCIMB 8594 / NRRL 2338)).